The chain runs to 673 residues: Armadillo repeat-containing protein 8 (673 aa).

Position 2 is an N-acetylalanine (Ala2). ARM repeat units lie at residues 51-92, 95-134, 138-176, 178-217, 224-265, 269-309, 313-352, 374-413, 416-455, 458-497, 501-540, 543-585, 588-627, and 634-673; these read NKQK…SLAM, ENNV…TIFT, TPEE…HCCK, PDHQ…VLAF, MTLV…YMCR, IRTD…YLIE, ELQR…HDLK, DIRK…SLSR, QQLR…NLLL, SPSK…NMAF, QKIK…NLLS, PHID…NIAD, TAKE…NLTW, and QERQ…QYLA. Position 337 is a phosphoserine (Ser337). At Ser512 the chain carries Phosphoserine.

Identified in the CTLH complex that contains GID4, RANBP9 and/or RANBP10, MKLN1, MAEA, RMND5A (or alternatively its paralog RMND5B), GID8, ARMC8, WDR26 and YPEL5. Within this complex, MAEA, RMND5A (or alternatively its paralog RMND5B), GID8, WDR26, and RANBP9 and/or RANBP10 form the catalytic core, while GID4, MKLN1, ARMC8 and YPEL5 have ancillary roles.

It is found in the nucleus. The protein resides in the cytoplasm. Component of the CTLH E3 ubiquitin-protein ligase complex that selectively accepts ubiquitin from UBE2H and mediates ubiquitination and subsequent proteasomal degradation of the transcription factor HBP1. The polypeptide is Armadillo repeat-containing protein 8 (Armc8) (Mus musculus (Mouse)).